Reading from the N-terminus, the 802-residue chain is ATP-dependent zinc metalloprotease FTSH 7, chloroplastic (802 aa).

The transit peptide at 1 to 55 (MTTTFEFLQPRIHGFATCCSSNSLLYSKASRFFNDRCRVYRQNPNRFVSNSITLP) directs the protein to the chloroplast. Residues 87-117 (CQEDDQNESSSEEEESSQSTPAKSERKREKK) form a disordered region. The span at 88–102 (QEDDQNESSSEEEES) shows a compositional bias: acidic residues. The next 2 membrane-spanning stretches (helical) occupy residues 134–154 (IIQAQGIGVLLLQLSVVMFVM) and 268–288 (GGFFNSALIALFYIAVLAGLI). 365–372 (GLPGTGKT) is a binding site for ATP. Position 590 (H590) interacts with Zn(2+). The active site involves E591. Positions 594 and 673 each coordinate Zn(2+).

This sequence in the N-terminal section; belongs to the AAA ATPase family. The protein in the C-terminal section; belongs to the peptidase M41 family. Requires Zn(2+) as cofactor.

The protein resides in the plastid. Its subcellular location is the chloroplast thylakoid membrane. Functionally, probable ATP-dependent zinc metallopeptidase. The sequence is that of ATP-dependent zinc metalloprotease FTSH 7, chloroplastic (FTSH7) from Arabidopsis thaliana (Mouse-ear cress).